The sequence spans 113 residues: Beta-microseminoprotein A1 (113 aa).

The first 20 residues, 1–20, serve as a signal peptide directing secretion; sequence MNVLLGGLVIFATFVTLCNG. Intrachain disulfides connect Cys-22-Cys-70, Cys-38-Cys-62, Cys-57-Cys-93, Cys-60-Cys-69, and Cys-84-Cys-107.

It belongs to the beta-microseminoprotein family.

The protein localises to the secreted. The chain is Beta-microseminoprotein A1 (MSPA) from Saguinus oedipus (Cotton-top tamarin).